A 123-amino-acid polypeptide reads, in one-letter code: MPTIQQLVRKGRQDKVEKNKTPALEGSPQRRGVCTRVFTTTPKKPNSALRKVARVRLTSGIEVTAYIPGEGHNLQEHSIVLVRGGRVKDLPGVRYKIIRGSLDTQGVKNRKQARSRYGAKKEK.

The interval 1–30 is disordered; the sequence is MPTIQQLVRKGRQDKVEKNKTPALEGSPQR. Basic and acidic residues predominate over residues 11–20; it reads GRQDKVEKNK. The residue at position 89 (Asp-89) is a 3-methylthioaspartic acid.

It belongs to the universal ribosomal protein uS12 family. Part of the 30S ribosomal subunit. Contacts proteins S8 and S17. May interact with IF1 in the 30S initiation complex.

In terms of biological role, with S4 and S5 plays an important role in translational accuracy. Functionally, interacts with and stabilizes bases of the 16S rRNA that are involved in tRNA selection in the A site and with the mRNA backbone. Located at the interface of the 30S and 50S subunits, it traverses the body of the 30S subunit contacting proteins on the other side and probably holding the rRNA structure together. The combined cluster of proteins S8, S12 and S17 appears to hold together the shoulder and platform of the 30S subunit. The chain is Small ribosomal subunit protein uS12 (rpsL) from Streptomyces avermitilis (strain ATCC 31267 / DSM 46492 / JCM 5070 / NBRC 14893 / NCIMB 12804 / NRRL 8165 / MA-4680).